We begin with the raw amino-acid sequence, 174 residues long: 3-hydroxydecanoyl-[acyl-carrier-protein] dehydratase (174 aa).

The active site involves His-71.

Belongs to the thioester dehydratase family. FabA subfamily. As to quaternary structure, homodimer.

The protein localises to the cytoplasm. The catalysed reaction is a (3R)-hydroxyacyl-[ACP] = a (2E)-enoyl-[ACP] + H2O. It catalyses the reaction (3R)-hydroxydecanoyl-[ACP] = (2E)-decenoyl-[ACP] + H2O. The enzyme catalyses (2E)-decenoyl-[ACP] = (3Z)-decenoyl-[ACP]. Its pathway is lipid metabolism; fatty acid biosynthesis. In terms of biological role, necessary for the introduction of cis unsaturation into fatty acids. Catalyzes the dehydration of (3R)-3-hydroxydecanoyl-ACP to E-(2)-decenoyl-ACP and then its isomerization to Z-(3)-decenoyl-ACP. Can catalyze the dehydratase reaction for beta-hydroxyacyl-ACPs with saturated chain lengths up to 16:0, being most active on intermediate chain length. The protein is 3-hydroxydecanoyl-[acyl-carrier-protein] dehydratase of Nitrobacter hamburgensis (strain DSM 10229 / NCIMB 13809 / X14).